The primary structure comprises 266 residues: MGAGCVKVTKYFLFLFNLLFFILGAVILGFGVWILADKSSFISVLQTSSSSLQVGAYVFIGVGAITMLMGFLGCIGAVNEVRCLLGLYFVFLLLILIAQVTVEVLFYFNANKLKQEMGNTVMDIIQNYSVNASSSREEAWDYVQAQVKCCGWVSPSNWTRNPVLKNSTKTTYPCSCEKTKEEDNQLIVKKGFCESDNSTASENSPEDWPVHPEGCMEKAQAWLQENFGILLGVCAGVAVIELLGLFLSICLCRYIHSEDYSKVPKY.

At 1-11 (MGAGCVKVTKY) the chain is on the cytoplasmic side. Residue C5 is the site of S-palmitoyl cysteine attachment. A helical transmembrane segment spans residues 12–32 (FLFLFNLLFFILGAVILGFGV). Over 33-53 (WILADKSSFISVLQTSSSSLQ) the chain is Extracellular. A helical transmembrane segment spans residues 54–72 (VGAYVFIGVGAITMLMGFL). The Cytoplasmic portion of the chain corresponds to 73–83 (GCIGAVNEVRC). C74 carries S-palmitoyl cysteine lipidation. A helical transmembrane segment spans residues 84-110 (LLGLYFVFLLLILIAQVTVEVLFYFNA). Over 111–227 (NKLKQEMGNT…KAQAWLQENF (117 aa)) the chain is Extracellular. N127, N131, N157, N166, and N197 each carry an N-linked (GlcNAc...) asparagine glycan. Residues 228–249 (GILLGVCAGVAVIELLGLFLSI) form a helical membrane-spanning segment. Over 250–266 (CLCRYIHSEDYSKVPKY) the chain is Cytoplasmic.

The protein belongs to the tetraspanin (TM4SF) family. Forms homooligomers. Interacts directly with IGSF8. Interacts with EGFR. Interacts with VEGFA and PDGFA. Interacts with ITGA4. Interacts with ITGA6; this interaction reduces ITGA6 cell surface expression. Interacts with ITGB1. Interacts with TLR4; this interaction inhibits TLR4-mediated signaling pathway. Interacts with TLR9. Interacts with PLAUR. Palmitoylated. Palmitoylation contributes to oligomerization and surface expression.

The protein resides in the cell membrane. Functionally, structural component of specialized membrane microdomains known as tetraspanin-enriched microdomains (TERMs), which act as platforms for receptor clustering and signaling. Participates thereby in diverse biological functions such as cell signal transduction, adhesion, migration and protein trafficking. Acts as a attenuator of EGF signaling, facilitating ligand-induced endocytosis of the receptor and its subsequent desensitization. Mechanistically, modulates ligand-induced ubiquitination and trafficking of EGFR via E3 ligase CBL phosphorylation by PKC. Increases cell-matrix adhesion by regulating the membrane organization of integrin alpha4/ITA4. Modulates adhesion and suppresses cell migration through other integrins such as the alpha6/ITGA6 and beta1/ITGB1. Decreases cell-associated plasminogen activation by interfering with the interaction between urokinase-type plasminogen activator/PLAU and its receptor PLAUR. Associates with CD4 or CD8 and delivers costimulatory signals for the TCR/CD3 pathway. Plays a role in the restrains phagocyte migration but supports macrophage activation. Plays a role in TLR9 trafficking to acidified CpG-containing compartments by controlling interaction between TLR9 and VAMP3 and subsequent myddosome assembly. Inhibits LPS-induced inflammatory response by preventing binding of LPS to TLR4 on the cell surface. Plays a role in the activation of macrophages into anti-inflammatory phenotypes. Independently of Toll-like receptor (TLR) signaling, is recruited to pathogen-containing phagosomes prior to fusion with lysosomes and participates in antigen presentation. Also acts to control angiogenesis and switch angiogenic milieu to quiescent state by binding and sequestering VEGFA and PDGFA to inhibit the signaling they trigger via their respective cell surface receptor. This chain is CD82 antigen (Cd82), found in Rattus norvegicus (Rat).